Here is a 288-residue protein sequence, read N- to C-terminus: Diaminopimelate epimerase (288 aa).

Residues Asn-14 and Asn-67 each contribute to the substrate site. Cys-76 functions as the Proton donor in the catalytic mechanism. Residues 77-78, Asn-166, Asn-199, and 217-218 each bind substrate; these read GN and ER. The active-site Proton acceptor is Cys-226. 227 to 228 lines the substrate pocket; the sequence is GT.

It belongs to the diaminopimelate epimerase family. Homodimer.

Its subcellular location is the cytoplasm. It carries out the reaction (2S,6S)-2,6-diaminopimelate = meso-2,6-diaminopimelate. Its pathway is amino-acid biosynthesis; L-lysine biosynthesis via DAP pathway; DL-2,6-diaminopimelate from LL-2,6-diaminopimelate: step 1/1. In terms of biological role, catalyzes the stereoinversion of LL-2,6-diaminopimelate (L,L-DAP) to meso-diaminopimelate (meso-DAP), a precursor of L-lysine and an essential component of the bacterial peptidoglycan. The sequence is that of Diaminopimelate epimerase from Bacillus anthracis (strain A0248).